A 453-amino-acid chain; its full sequence is GPPGPPGAPGKALKGDIPDPGLPGDQGPPGPDGPRGVPGPPGPPGSVDLLKGEPGDCGLPGPPGLPGPPGPPGHKGFPGCDGKHGQKGPMGFPGPQGPPGSPGPPGDKGLPGPPGRRGPLGPPGSRGEPGPPADLDACPRIPGLPGVPGPRGPEGTMGLPGMRGPPGPGCKGEPGLDGRRGEDGLPGSPGPPGHKGDMGEAGCPGAPGPPGPMGDPGPIGFGPGYLSGFLLVLHSQTDGEPTCPMGMPRLWTGYSLLYLEGQERAHNQDLGLAGSCLPIFSTLPFAYCNIHQVCHYARRNDRSYWLASTAPLPMTPLSEDEIRPYISRCAVCEAPAQAVAVHSQDQSIPPCPRAWRSLWIGYSFLMHTGAGDQGGGQALMSPGSCLEDFRAAPFLECQGRQGTCHFFANKYSFWLTTVRPDLQFSSAPLPDTLKESHAQRQKISRCQVCVKHS.

The segment at 1–218 (GPPGPPGAPG…PPGPMGDPGP (218 aa)) is disordered. Residues 1–222 (GPPGPPGAPG…MGDPGPIGFG (222 aa)) are triple-helical region. Composition is skewed to pro residues over residues 26-44 (QGPPGPDGPRGVPGPPGPP), 60-72 (PGPPGLPGPPGPP), and 95-122 (PQGPPGSPGPPGDKGLPGPPGRRGPLGP). The segment covering 153–162 (PEGTMGLPGM) has biased composition (low complexity). The span at 174–183 (PGLDGRRGED) shows a compositional bias: basic and acidic residues. Residues 206–215 (APGPPGPMGD) show a composition bias toward pro residues. Residues 228–453 (GFLLVLHSQT…SRCQVCVKHS (226 aa)) form the Collagen IV NC1 domain. 6 cysteine pairs are disulfide-bonded: Cys243–Cys332, Cys276–Cys329, Cys288–Cys294, Cys351–Cys449, Cys385–Cys446, and Cys397–Cys404.

The protein belongs to the type IV collagen family. There are six type IV collagen isoforms, alpha 1(IV)-alpha 6(IV), each of which can form a triple helix structure with 2 other chains to generate type IV collagen network. The alpha 3(IV) chain forms a triple helical protomer with alpha 4(IV) and alpha 5(IV); this triple helical structure dimerizes through NC1-NC1 domain interactions such that the alpha 3(IV), alpha 4(IV) and alpha 5(IV) chains of one protomer connect with the alpha 5(IV), alpha 4(IV) and alpha 3(IV) chains of the opposite protomer, respectively. Associates with LAMB2 at the neuromuscular junction and in GBM. Post-translationally, prolines at the third position of the tripeptide repeating unit (G-X-Y) are hydroxylated in some or all of the chains. Type IV collagens contain numerous cysteine residues which are involved in inter- and intramolecular disulfide bonding. 12 of these, located in the NC1 domain, are conserved in all known type IV collagens. In terms of processing, the trimeric structure of the NC1 domains is stabilized by covalent bonds between Lys and Met residues. Alpha 3 and alpha 4 type IV collagens are colocalized and present only in basement membranes of kidney, eye, cochlea, lung and brain.

The protein resides in the secreted. The protein localises to the extracellular space. It is found in the extracellular matrix. It localises to the basement membrane. Its function is as follows. Type IV collagen is the major structural component of glomerular basement membranes (GBM), forming a 'chicken-wire' meshwork together with laminins, proteoglycans and entactin/nidogen. In Bos taurus (Bovine), this protein is Collagen alpha-4(IV) chain (COL4A4).